The following is a 156-amino-acid chain: uncharacterized protein (156 aa).

The next 3 membrane-spanning stretches (helical) occupy residues 42–59 (LLMM…MTTV), 79–98 (ASFL…LLLY), and 105–127 (SLGR…VLGI).

Its subcellular location is the cell membrane. This is an uncharacterized protein from Archaeoglobus fulgidus (strain ATCC 49558 / DSM 4304 / JCM 9628 / NBRC 100126 / VC-16).